We begin with the raw amino-acid sequence, 313 residues long: Methionyl-tRNA formyltransferase (313 aa).

109-112 provides a ligand contact to (6S)-5,6,7,8-tetrahydrofolate; sequence SLLP.

The protein belongs to the Fmt family.

The enzyme catalyses L-methionyl-tRNA(fMet) + (6R)-10-formyltetrahydrofolate = N-formyl-L-methionyl-tRNA(fMet) + (6S)-5,6,7,8-tetrahydrofolate + H(+). Its function is as follows. Attaches a formyl group to the free amino group of methionyl-tRNA(fMet). The formyl group appears to play a dual role in the initiator identity of N-formylmethionyl-tRNA by promoting its recognition by IF2 and preventing the misappropriation of this tRNA by the elongation apparatus. The protein is Methionyl-tRNA formyltransferase of Pelotomaculum thermopropionicum (strain DSM 13744 / JCM 10971 / SI).